Consider the following 491-residue polypeptide: MSTPSIAPAPAPLVPALAAKPAISPSPGPGTPGSITSKEWVIPPRPKPGRKPATDTPPTKRKAQNRAAQRAFRERRAARVNELEEQIKKIEDEHEIHIAAFKEQITNLSREVEQCRSEMTWWRDRCHALEKEVSVERSAKEAIVKEFRSSLSDREAVRSDKGLAPLTTSTPQARSSDRPDNGDASNNDSGEGREEVPLGCNDCSTSHCQCIEDAFTMPGVVAQEQSRRLDTTKPGLSEPQIKPDPEEMEIDFTSRFAATQQQDQSPTSVSSPAVDPCGFCSDGTPCICAEMAAQEEQRPRRNSFENNRLAPIQNLSQFTPPPSDGDVRSDVTLPPISQATNPCANGPGTCAQCLADPRRTLFCKTLAASRSPSAAPSGCCGGKGADGGCCQSRNTNVSRGRSGSNNNTSSGSSAAPSLTLSCADAYTTLSRHPNFSRATDELSTWLPKLHTLPKPRDFPLTDRGVPRAALEVEAASVMGVLRYFDRRFADK.

The tract at residues 19-73 (AKPAISPSPGPGTPGSITSKEWVIPPRPKPGRKPATDTPPTKRKAQNRAAQRAFR) is disordered. A bZIP domain is found at 55 to 95 (DTPPTKRKAQNRAAQRAFRERRAARVNELEEQIKKIEDEHE). The tract at residues 60–79 (KRKAQNRAAQRAFRERRAAR) is basic motif. The tract at residues 83 to 90 (LEEQIKKI) is leucine-zipper. The segment covering 149 to 161 (SSLSDREAVRSDK) has biased composition (basic and acidic residues). Disordered stretches follow at residues 149-196 (SSLS…REEV), 224-245 (EQSRRLDTTKPGLSEPQIKPDP), and 397-416 (VSRGRSGSNNNTSSGSSAAP). Over residues 397-413 (VSRGRSGSNNNTSSGSS) the composition is skewed to low complexity.

It belongs to the bZIP family. YAP subfamily.

The protein resides in the nucleus. Its function is as follows. Transcription factor required for repression of genes during iron starvation. Represses iron-dependent and mitochondrial-localized activities including respiration, TCA cycle, amino acid metabolism, iron-sulfur-cluster and heme biosynthesis. Iron starvation causes a massive remodeling of the amino acid pool and hapX is essential for the coordination of the production of siderophores and their precursor ornithine. This chain is bZIP transcription factor hapX, found in Aspergillus fumigatus (strain ATCC MYA-4609 / CBS 101355 / FGSC A1100 / Af293) (Neosartorya fumigata).